Here is a 418-residue protein sequence, read N- to C-terminus: Argininosuccinate synthase (418 aa).

ATP contacts are provided by residues 14–22 (AYSGGLDTS) and Ala42. Residues Tyr94 and Ser99 each coordinate L-citrulline. Gly124 contacts ATP. The L-aspartate site is built by Thr126, Asn130, and Asp131. Asn130 lines the L-citrulline pocket. Residues Arg134, Ser183, Ser192, Glu273, and Tyr285 each coordinate L-citrulline.

The protein belongs to the argininosuccinate synthase family. Type 1 subfamily. Homotetramer.

It localises to the cytoplasm. It carries out the reaction L-citrulline + L-aspartate + ATP = 2-(N(omega)-L-arginino)succinate + AMP + diphosphate + H(+). It functions in the pathway amino-acid biosynthesis; L-arginine biosynthesis; L-arginine from L-ornithine and carbamoyl phosphate: step 2/3. The chain is Argininosuccinate synthase from Colwellia psychrerythraea (strain 34H / ATCC BAA-681) (Vibrio psychroerythus).